The chain runs to 179 residues: MAELDRKELADLVRRLSVVQGCVTLSSGKQADHYVDLRRATLHHRASALIGRLMRELTKDWNYTVVGGLTLGADPVAIAIIHSPGRPIDAFVVRKYAKTHGLQRLIEGSEVSGQRVLVVEDTSTTGASALTAVRAVQDAGGDVVGVATVVDRGTGAAEAIKAEGLLYRSVLGLADLGLG.

5-phospho-alpha-D-ribose 1-diphosphate contacts are provided by residues Arg-94, Lys-95, Lys-98, His-100, and 120–128 (EDTSTTGAS). Residues Thr-124 and Arg-152 each coordinate orotate.

Belongs to the purine/pyrimidine phosphoribosyltransferase family. PyrE subfamily. In terms of assembly, homodimer. It depends on Mg(2+) as a cofactor.

The enzyme catalyses orotidine 5'-phosphate + diphosphate = orotate + 5-phospho-alpha-D-ribose 1-diphosphate. Its pathway is pyrimidine metabolism; UMP biosynthesis via de novo pathway; UMP from orotate: step 1/2. Functionally, catalyzes the transfer of a ribosyl phosphate group from 5-phosphoribose 1-diphosphate to orotate, leading to the formation of orotidine monophosphate (OMP). This Mycobacterium leprae (strain TN) protein is Orotate phosphoribosyltransferase.